We begin with the raw amino-acid sequence, 328 residues long: L-lactate dehydrogenase (328 aa).

Residues V18, E39, K46, Y71, and 85 to 86 (GA) contribute to the NAD(+) site. Substrate-binding residues include Q88 and R94. NAD(+)-binding positions include S107, 124–126 (AAN), and S149. 126 to 129 (NPVD) contacts substrate. Substrate is bound at residue 154–157 (DSAR). The beta-D-fructose 1,6-bisphosphate site is built by R159 and H174. H181 functions as the Proton acceptor in the catalytic mechanism. Position 226 is a phosphotyrosine (Y226). Substrate is bound at residue T235.

The protein belongs to the LDH/MDH superfamily. LDH family. In terms of assembly, homotetramer.

It localises to the cytoplasm. It catalyses the reaction (S)-lactate + NAD(+) = pyruvate + NADH + H(+). It functions in the pathway fermentation; pyruvate fermentation to lactate; (S)-lactate from pyruvate: step 1/1. With respect to regulation, allosterically activated by fructose 1,6-bisphosphate (FBP). Its function is as follows. Catalyzes the conversion of lactate to pyruvate. The protein is L-lactate dehydrogenase of Streptococcus thermophilus (strain ATCC BAA-250 / LMG 18311).